A 238-amino-acid chain; its full sequence is Survival of motor neuron-related-splicing factor 30 (238 aa).

Residues Ser-72–Lys-132 form the Tudor domain. Residues Lys-142 to Lys-160 carry the Nuclear localization signal motif. At Ser-201 the chain carries Phosphoserine. Residue Lys-219 is modified to N6-acetyllysine.

It belongs to the SMN family. Associates with spliceosomes. Associates with U4/U5/U6 tri-snRNP and with U2 snRNP.

It localises to the nucleus speckle. Its subcellular location is the nucleus. The protein localises to the cajal body. In terms of biological role, involved in spliceosome assembly. The sequence is that of Survival of motor neuron-related-splicing factor 30 (Smndc1) from Rattus norvegicus (Rat).